A 1642-amino-acid chain; its full sequence is Cholesterol transporter ABCA5 (1642 aa).

The helical transmembrane segment at 32-52 threads the bilayer; it reads SVQEILFPLFFLFWLILISMM. Residue asparagine 86 is glycosylated (N-linked (GlcNAc...) asparagine). Helical transmembrane passes span 220–240, 264–284, 297–317, 328–348, 355–375, and 396–416; these read VILI…AIHI, LSWV…MAVI, IVIF…ALML, GIVE…IILI, LVWL…AQVM, and LIIT…LAVY. Asparagine 458 carries an N-linked (GlcNAc...) asparagine glycan. One can recognise an ABC transporter 1 domain in the interval 478 to 713; it reads IRISGIQKTY…WGIGYRLSMY (236 aa). 514-521 contacts ATP; that stretch reads GHSGTGKS. A run of 2 helical transmembrane segments spans residues 866–886 and 967–987; these read LLLL…HHSF and VFAA…VNII. An N-linked (GlcNAc...) asparagine glycan is attached at asparagine 996. 6 consecutive transmembrane segments (helical) span residues 1021–1041, 1071–1091, 1102–1122, 1139–1159, 1169–1189, and 1207–1227; these read LYFQ…YFAM, VVDI…LLAF, FLAV…FTYI, FIYS…FFMG, AFCI…FIKI, and LSVA…LLQY. The tract at residues 1249–1268 is disordered; that stretch reads KSKNRKLPEPPDNEDEDEDV. Over residues 1259-1268 the composition is skewed to acidic residues; it reads PDNEDEDEDV. Residues 1290–1533 form the ABC transporter 2 domain; that stretch reads IMVSNLHKEY…FGKGYFLEIK (244 aa). Position 1333–1340 (1333–1340) interacts with ATP; it reads GPNGAGKS.

Belongs to the ABC transporter superfamily. ABCA family. N-glycosylated. In terms of tissue distribution, ubiquitously expressed. Highly expressed in testis, skeletal muscle, kidney, liver and placenta. Expressed in both the epithelial and mesenchymal compartments, present within the outer root sheath (ORS) of the hair follicle as well as dermal sheath. Expressed in multiple regions of the brain, including the hippocampus, superior frontal and inferior temporal cortices. Strongly expressed in neurons and moderately in microglia, with only weak expression in astrocytes and oligodendrocytes.

It localises to the golgi apparatus membrane. It is found in the lysosome membrane. Its subcellular location is the late endosome membrane. The protein localises to the cell membrane. It catalyses the reaction cholesterol(in) + ATP + H2O = cholesterol(out) + ADP + phosphate + H(+). In terms of biological role, cholesterol efflux transporter in macrophages that is responsible for APOAI/high-density lipoproteins (HDL) formation at the plasma membrane under high cholesterol levels and participates in reverse cholesterol transport. May play a role in the processing of autolysosomes. The chain is Cholesterol transporter ABCA5 from Homo sapiens (Human).